Here is a 211-residue protein sequence, read N- to C-terminus: Pyridoxine/pyridoxamine 5'-phosphate oxidase (211 aa).

Substrate contacts are provided by residues 7-10 (RTDY) and Lys65. Residues 60–65 (RIVLIK), 75–76 (FT), Arg81, and Lys82 each bind FMN. Substrate is bound by residues Tyr122, Arg126, and Ser130. FMN contacts are provided by residues 139–140 (QS) and Trp183. Substrate is bound at residue 189–191 (RLH). Arg193 contacts FMN.

The protein belongs to the pyridoxamine 5'-phosphate oxidase family. Homodimer. It depends on FMN as a cofactor.

The enzyme catalyses pyridoxamine 5'-phosphate + O2 + H2O = pyridoxal 5'-phosphate + H2O2 + NH4(+). It carries out the reaction pyridoxine 5'-phosphate + O2 = pyridoxal 5'-phosphate + H2O2. It functions in the pathway cofactor metabolism; pyridoxal 5'-phosphate salvage; pyridoxal 5'-phosphate from pyridoxamine 5'-phosphate: step 1/1. The protein operates within cofactor metabolism; pyridoxal 5'-phosphate salvage; pyridoxal 5'-phosphate from pyridoxine 5'-phosphate: step 1/1. In terms of biological role, catalyzes the oxidation of either pyridoxine 5'-phosphate (PNP) or pyridoxamine 5'-phosphate (PMP) into pyridoxal 5'-phosphate (PLP). The chain is Pyridoxine/pyridoxamine 5'-phosphate oxidase from Herminiimonas arsenicoxydans.